A 345-amino-acid polypeptide reads, in one-letter code: Adenylosuccinate synthetase (345 aa).

GTP contacts are provided by residues 18 to 24 and 48 to 50; these read GDEGKGK and GHT. The active-site Proton acceptor is aspartate 19. The Mg(2+) site is built by aspartate 19 and glycine 48. IMP contacts are provided by residues 19–22, 46–49, threonine 133, arginine 147, glutamine 185, threonine 200, and arginine 262; these read DEGK and NAGH. The active-site Proton donor is histidine 49. 258 to 264 is a substrate binding site; sequence TVTGRRR. Residues arginine 264, 290–292, and 330–332 each bind GTP; these read GLD and STG.

Belongs to the adenylosuccinate synthetase family. Homodimer. Mg(2+) serves as cofactor.

It is found in the cytoplasm. The enzyme catalyses IMP + L-aspartate + GTP = N(6)-(1,2-dicarboxyethyl)-AMP + GDP + phosphate + 2 H(+). It participates in purine metabolism; AMP biosynthesis via de novo pathway; AMP from IMP: step 1/2. In terms of biological role, plays an important role in the de novo pathway of purine nucleotide biosynthesis. Catalyzes the first committed step in the biosynthesis of AMP from IMP. The polypeptide is Adenylosuccinate synthetase (Methanocaldococcus jannaschii (strain ATCC 43067 / DSM 2661 / JAL-1 / JCM 10045 / NBRC 100440) (Methanococcus jannaschii)).